The following is an 85-amino-acid chain: Putative membrane protein insertion efficiency factor (85 aa).

This sequence belongs to the UPF0161 family.

It localises to the cell inner membrane. In terms of biological role, could be involved in insertion of integral membrane proteins into the membrane. This Escherichia coli O6:H1 (strain CFT073 / ATCC 700928 / UPEC) protein is Putative membrane protein insertion efficiency factor.